The following is an 849-amino-acid chain: Membrane protein-large ribosomal subunit bL9 fusion protein (849 aa).

The interval 1–680 is unknown; the sequence is MFSKNKHNTK…TQLEGTNIKT (680 aa). The next 2 membrane-spanning stretches (helical) occupy residues 11-31 and 64-84; these read FIVIACVIVVLILILFCLDFQ and IIFFIFNFFGKIILASFVISF. A GGDEF domain is found at 214-342; the sequence is KTLALAMITF…GGDQVVVNIE (129 aa). Positions 681 to 849 are large ribosomal subunit protein bL9; it reads VTDTLKHFLK…FLNVTERKSK (169 aa).

It belongs to the bacterial ribosomal protein bL9 family.

It localises to the cell membrane. Its function is as follows. Binds to the 23S rRNA. The polypeptide is Membrane protein-large ribosomal subunit bL9 fusion protein (Onion yellows phytoplasma (strain OY-M)).